The sequence spans 271 residues: Urease accessory protein UreD (271 aa).

This sequence belongs to the UreD family. As to quaternary structure, ureD, UreF and UreG form a complex that acts as a GTP-hydrolysis-dependent molecular chaperone, activating the urease apoprotein by helping to assemble the nickel containing metallocenter of UreC. The UreE protein probably delivers the nickel.

It is found in the cytoplasm. Its function is as follows. Required for maturation of urease via the functional incorporation of the urease nickel metallocenter. The protein is Urease accessory protein UreD of Bacillus sp. (strain TB-90).